A 234-amino-acid polypeptide reads, in one-letter code: Sugar fermentation stimulation protein homolog (234 aa).

Belongs to the SfsA family.

The polypeptide is Sugar fermentation stimulation protein homolog (Pectobacterium atrosepticum (strain SCRI 1043 / ATCC BAA-672) (Erwinia carotovora subsp. atroseptica)).